A 64-amino-acid chain; its full sequence is Translational regulator CsrA (64 aa).

Belongs to the CsrA/RsmA family. Homodimer; the beta-strands of each monomer intercalate to form a hydrophobic core, while the alpha-helices form wings that extend away from the core.

It localises to the cytoplasm. A key translational regulator that binds mRNA to regulate translation initiation and/or mRNA stability. Mediates global changes in gene expression, shifting from rapid growth to stress survival by linking envelope stress, the stringent response and the catabolite repression systems. Usually binds in the 5'-UTR; binding at or near the Shine-Dalgarno sequence prevents ribosome-binding, repressing translation, binding elsewhere in the 5'-UTR can activate translation and/or stabilize the mRNA. Its function is antagonized by small RNA(s). The chain is Translational regulator CsrA from Actinobacillus pleuropneumoniae serotype 5b (strain L20).